Consider the following 71-residue polypeptide: MAEDVRAEIVASVLEVVVNEGDQIDKGDVVVLLESMKMEIPVLAEAAGTVSKVAVSVGDVIQAGDLIAVIS.

In terms of domain architecture, Biotinyl-binding spans 2-71 (AEDVRAEIVA…QAGDLIAVIS (70 aa)). Residue Lys37 is modified to N6-biotinyllysine.

This Mycobacterium bovis (strain ATCC BAA-935 / AF2122/97) protein is Biotinylated protein TB7.3.